Here is a 160-residue protein sequence, read N- to C-terminus: Phosphoribosyl-ATP pyrophosphatase (160 aa).

This sequence belongs to the PRA-PH family.

The protein resides in the cytoplasm. It catalyses the reaction 1-(5-phospho-beta-D-ribosyl)-ATP + H2O = 1-(5-phospho-beta-D-ribosyl)-5'-AMP + diphosphate + H(+). It participates in amino-acid biosynthesis; L-histidine biosynthesis; L-histidine from 5-phospho-alpha-D-ribose 1-diphosphate: step 2/9. The polypeptide is Phosphoribosyl-ATP pyrophosphatase (Granulibacter bethesdensis (strain ATCC BAA-1260 / CGDNIH1)).